Consider the following 704-residue polypeptide: Elongation factor G (704 aa).

A tr-type G domain is found at 8-291 (DKVRNIGIMA…TVVECLPSPV (284 aa)). GTP is bound by residues 17 to 24 (AHIDAGKT), 90 to 94 (DTPGH), and 144 to 147 (NKMD).

It belongs to the TRAFAC class translation factor GTPase superfamily. Classic translation factor GTPase family. EF-G/EF-2 subfamily.

It localises to the cytoplasm. Functionally, catalyzes the GTP-dependent ribosomal translocation step during translation elongation. During this step, the ribosome changes from the pre-translocational (PRE) to the post-translocational (POST) state as the newly formed A-site-bound peptidyl-tRNA and P-site-bound deacylated tRNA move to the P and E sites, respectively. Catalyzes the coordinated movement of the two tRNA molecules, the mRNA and conformational changes in the ribosome. In Prosthecochloris aestuarii (strain DSM 271 / SK 413), this protein is Elongation factor G.